A 714-amino-acid chain; its full sequence is Cadherin-13 (714 aa).

The first 22 residues, 1–22 (MQPRTPLTLCVLLSQVLLVTSA), serve as a signal peptide directing secretion. Positions 23-138 (DDLECTPGFQ…RTSPVPRQKR (116 aa)) are excised as a propeptide. Cadherin domains lie at 143–245 (SPIL…RPIF), 246–363 (REGP…SPKF), 364–477 (TKKE…GPVF), 478–585 (YPDP…APVI), and 586–680 (YPTV…VQVC). A disordered region spans residues 156 to 183 (PRDVGKVVDSDRPEGSKFRLTGKGVDQD). A compositionally biased stretch (basic and acidic residues) spans 158–172 (DVGKVVDSDRPEGSK). Residues Asn382, Asn489, Asn500, Asn530, Asn598, Asn638, and Asn671 are each glycosylated (N-linked (GlcNAc...) asparagine). The GPI-anchor amidated glycine moiety is linked to residue Gly693. A propeptide spans 694–714 (ALHLSLSLLLLFSLLSLLSGL) (removed in mature form).

In terms of assembly, by contrast to classical cadherins, homodimerization in trans is not mediated by cadherin EC1 domain strand-swapping, but instead through a homophilic adhesive interface which joins two elongated EC1-EC2 domains through a region near their Ca2+-binding sites to form a tetrahedral, X-like shape.

Its subcellular location is the cell membrane. It localises to the cytoplasm. Its function is as follows. Cadherins are calcium-dependent cell adhesion proteins. They preferentially interact with themselves in a homophilic manner in connecting cells; cadherins may thus contribute to the sorting of heterogeneous cell types. May act as a negative regulator of neural cell growth. This chain is Cadherin-13 (Cdh13), found in Mus musculus (Mouse).